A 93-amino-acid chain; its full sequence is RNA-binding protein Hfq (93 aa).

The Sm domain occupies 9–68 (DPFLNALRRERVPVSIYLVNGIKLQGQVESFDQFVILLKNTVSQMVYKHAISTVVPARPF). Residues 70–93 (VNSHTAAPSPAGGFNGQQDDNNDQ) are disordered.

The protein belongs to the Hfq family. Homohexamer.

Its function is as follows. RNA chaperone that binds small regulatory RNA (sRNAs) and mRNAs to facilitate mRNA translational regulation in response to envelope stress, environmental stress and changes in metabolite concentrations. Also binds with high specificity to tRNAs. The sequence is that of RNA-binding protein Hfq from Shewanella sediminis (strain HAW-EB3).